Reading from the N-terminus, the 336-residue chain is Holliday junction branch migration complex subunit RuvB (336 aa).

The large ATPase domain (RuvB-L) stretch occupies residues 4–184 (ADRLISADAI…FGIVQRLEFY (181 aa)). Residues Arg-24, Gly-65, Lys-68, Thr-69, Thr-70, 131-133 (EDY), Arg-174, Tyr-184, and Arg-221 contribute to the ATP site. Mg(2+) is bound at residue Thr-69. Residues 185–255 (NVADLQYIVG…VATQALDMLA (71 aa)) form a small ATPAse domain (RuvB-S) region. The segment at 258–336 (TEGFDYMDRK…HFGLTREDLG (79 aa)) is head domain (RuvB-H). Arg-294, Arg-313, and Arg-318 together coordinate DNA.

The protein belongs to the RuvB family. In terms of assembly, homohexamer. Forms an RuvA(8)-RuvB(12)-Holliday junction (HJ) complex. HJ DNA is sandwiched between 2 RuvA tetramers; dsDNA enters through RuvA and exits via RuvB. An RuvB hexamer assembles on each DNA strand where it exits the tetramer. Each RuvB hexamer is contacted by two RuvA subunits (via domain III) on 2 adjacent RuvB subunits; this complex drives branch migration. In the full resolvosome a probable DNA-RuvA(4)-RuvB(12)-RuvC(2) complex forms which resolves the HJ.

The protein resides in the cytoplasm. The catalysed reaction is ATP + H2O = ADP + phosphate + H(+). Functionally, the RuvA-RuvB-RuvC complex processes Holliday junction (HJ) DNA during genetic recombination and DNA repair, while the RuvA-RuvB complex plays an important role in the rescue of blocked DNA replication forks via replication fork reversal (RFR). RuvA specifically binds to HJ cruciform DNA, conferring on it an open structure. The RuvB hexamer acts as an ATP-dependent pump, pulling dsDNA into and through the RuvAB complex. RuvB forms 2 homohexamers on either side of HJ DNA bound by 1 or 2 RuvA tetramers; 4 subunits per hexamer contact DNA at a time. Coordinated motions by a converter formed by DNA-disengaged RuvB subunits stimulates ATP hydrolysis and nucleotide exchange. Immobilization of the converter enables RuvB to convert the ATP-contained energy into a lever motion, pulling 2 nucleotides of DNA out of the RuvA tetramer per ATP hydrolyzed, thus driving DNA branch migration. The RuvB motors rotate together with the DNA substrate, which together with the progressing nucleotide cycle form the mechanistic basis for DNA recombination by continuous HJ branch migration. Branch migration allows RuvC to scan DNA until it finds its consensus sequence, where it cleaves and resolves cruciform DNA. The chain is Holliday junction branch migration complex subunit RuvB from Pectobacterium carotovorum subsp. carotovorum (strain PC1).